Here is a 316-residue protein sequence, read N- to C-terminus: Porphobilinogen deaminase (316 aa).

An S-(dipyrrolylmethanemethyl)cysteine modification is found at Cys-245.

The protein belongs to the HMBS family. As to quaternary structure, monomer. The cofactor is dipyrromethane.

It carries out the reaction 4 porphobilinogen + H2O = hydroxymethylbilane + 4 NH4(+). It participates in porphyrin-containing compound metabolism; protoporphyrin-IX biosynthesis; coproporphyrinogen-III from 5-aminolevulinate: step 2/4. It functions in the pathway porphyrin-containing compound metabolism; chlorophyll biosynthesis. Functionally, tetrapolymerization of the monopyrrole PBG into the hydroxymethylbilane pre-uroporphyrinogen in several discrete steps. The protein is Porphobilinogen deaminase of Prochlorococcus marinus (strain MIT 9515).